Here is a 170-residue protein sequence, read N- to C-terminus: MTEEIQNWMHKAFQMAQDALNNGEVPVGCLMVYDNQVVGKGRNEVNETKNATRHAEMVAIDQVLDWCEKNSKKSRDVFENIVLYVTVEPCIMCAGALRLLKIPLVVYGCRNERFGGCGSVLNVAGDNIPDTGTEFKYIGGYQAEKAVELLKTFYKQENPNAPRSKVRKKE.

Residues 3 to 128 (EEIQNWMHKA…SVLNVAGDNI (126 aa)) form the CMP/dCMP-type deaminase domain. Zn(2+) is bound at residue H54. The Proton donor role is filled by E56. Zn(2+) contacts are provided by C90 and C93.

Belongs to the cytidine and deoxycytidylate deaminase family. ADAT2 subfamily. Zn(2+) is required as a cofactor.

The enzyme catalyses adenosine(34) in tRNA + H2O + H(+) = inosine(34) in tRNA + NH4(+). Probably participates in deamination of adenosine-34 to inosine in many tRNAs. This chain is tRNA-specific adenosine deaminase 2 (adat2), found in Xenopus tropicalis (Western clawed frog).